An 867-amino-acid chain; its full sequence is Alanine--tRNA ligase (867 aa).

Zn(2+) contacts are provided by His-556, His-560, Cys-658, and His-662.

Belongs to the class-II aminoacyl-tRNA synthetase family. Zn(2+) is required as a cofactor.

It localises to the cytoplasm. The catalysed reaction is tRNA(Ala) + L-alanine + ATP = L-alanyl-tRNA(Ala) + AMP + diphosphate. Its function is as follows. Catalyzes the attachment of alanine to tRNA(Ala) in a two-step reaction: alanine is first activated by ATP to form Ala-AMP and then transferred to the acceptor end of tRNA(Ala). Also edits incorrectly charged Ser-tRNA(Ala) and Gly-tRNA(Ala) via its editing domain. This chain is Alanine--tRNA ligase, found in Fusobacterium nucleatum subsp. nucleatum (strain ATCC 25586 / DSM 15643 / BCRC 10681 / CIP 101130 / JCM 8532 / KCTC 2640 / LMG 13131 / VPI 4355).